Here is a 447-residue protein sequence, read N- to C-terminus: Probable glycine dehydrogenase (decarboxylating) subunit 1 (447 aa).

It belongs to the GcvP family. N-terminal subunit subfamily. In terms of assembly, the glycine cleavage system is composed of four proteins: P, T, L and H. In this organism, the P 'protein' is a heterodimer of two subunits.

The catalysed reaction is N(6)-[(R)-lipoyl]-L-lysyl-[glycine-cleavage complex H protein] + glycine + H(+) = N(6)-[(R)-S(8)-aminomethyldihydrolipoyl]-L-lysyl-[glycine-cleavage complex H protein] + CO2. The glycine cleavage system catalyzes the degradation of glycine. The P protein binds the alpha-amino group of glycine through its pyridoxal phosphate cofactor; CO(2) is released and the remaining methylamine moiety is then transferred to the lipoamide cofactor of the H protein. The sequence is that of Probable glycine dehydrogenase (decarboxylating) subunit 1 from Beijerinckia indica subsp. indica (strain ATCC 9039 / DSM 1715 / NCIMB 8712).